Reading from the N-terminus, the 843-residue chain is Probable cleavage and polyadenylation specificity factor subunit 2 (843 aa).

A compositionally biased stretch (basic and acidic residues) spans 414-425; that stretch reads AEETRLRMERAR. Disordered stretches follow at residues 414-443 and 691-753; these read AEET…DIAA and DKNR…TKGK. Residues 432-441 show a composition bias toward acidic residues; that stretch reads ESDDSDDDDI. The segment covering 732-746 has biased composition (basic and acidic residues); that stretch reads SGKEVENGHTNDSRT.

This sequence belongs to the metallo-beta-lactamase superfamily. RNA-metabolizing metallo-beta-lactamase-like family. CPSF2/YSH1 subfamily. As to quaternary structure, CPSF is a heterotetramer composed of four distinct subunits 160, 100, 70 and 30 kDa.

The protein localises to the nucleus. CPSF plays a key role in pre-mRNA 3'-end formation, recognizing the AAUAAA signal sequence and interacting with poly(A)polymerase and other factors to bring about cleavage and poly(A) addition. The sequence is that of Probable cleavage and polyadenylation specificity factor subunit 2 (cpsf-2) from Caenorhabditis elegans.